The primary structure comprises 547 residues: Kelch repeat and BTB domain-containing protein 2 (547 aa).

The BTB domain maps to 20-89 (CDVIITIGDG…LYNRHISSMN (70 aa)). 3 Kelch repeats span residues 295–342 (DIII…VIDD), 343–389 (TIYA…VLDQ), and 391–454 (IYII…SHKD).

As to quaternary structure, interacts (via BTB domain) with host CUL3.

The protein localises to the host cytoplasm. Functionally, probable substrate-specific adapter of CUL3-containing E3 ubiquitin-protein ligases which mediate the ubiquitination and subsequent proteasomal degradation of host target proteins. The polypeptide is Kelch repeat and BTB domain-containing protein 2 (KBTB2) (Bos taurus (Bovine)).